Consider the following 689-residue polypeptide: Solute carrier family 22 member 23 (689 aa).

Disordered regions lie at residues 1–55 (MAID…PLPA) and 162–188 (TASWGTTSNRSNSSDTPPLPSPPGKGN). N-linked (GlcNAc...) asparagine glycosylation is present at Asn24. The segment covering 165–177 (WGTTSNRSNSSDT) has biased composition (polar residues). The next 2 helical transmembrane spans lie at 229 to 249 (FSLLVGLIFGYLITGCIADWV) and 253 to 273 (PVLLFSVIFILIFGLTVALSV). Residue Asn274 is glycosylated (N-linked (GlcNAc...) asparagine). Transmembrane regions (helical) follow at residues 283 to 303 (FFEGFCLAGIILTLYALRIEL), 310 to 330 (FIITMVASFVAMAGQFLMPGL), 339 to 359 (VLQALIICPFLLMLLYWSIFP), 462 to 482 (ADYYTMASIALASCLAMCLVV), 489 to 509 (GGLLLFMILTALASLLQLGLL), 541 to 561 (IAFSIVGMFASHAVGSLSVFF), 572 to 592 (CGGLGLVLASAGFGMLTAPII), and 601 to 621 (FLHHIIFACCTLICIICILLL).

This sequence belongs to the major facilitator (TC 2.A.1) superfamily. Organic cation transporter (TC 2.A.1.19) family. As to expression, expressed in many tissues, including brain, spinal cord, kidney, liver, eye, adipose tissue, lung, epididymis, adrenal gland, pineal gland, skeletal muscle, heart, spleen, thymus, ovary, uterus, testis and epididymis.

It is found in the membrane. This Rattus norvegicus (Rat) protein is Solute carrier family 22 member 23 (Slc22a23).